The primary structure comprises 763 residues: Phosphoglycerol transferase I (763 aa).

4 consecutive transmembrane segments (helical) span residues leucine 4–tryptophan 19, tryptophan 26–serine 48, tyrosine 76–leucine 98, and proline 105–alanine 127.

It belongs to the OpgB family.

Its subcellular location is the cell inner membrane. The enzyme catalyses a phosphatidylglycerol + a membrane-derived-oligosaccharide D-glucose = a 1,2-diacyl-sn-glycerol + a membrane-derived-oligosaccharide 6-(glycerophospho)-D-glucose.. The protein operates within glycan metabolism; osmoregulated periplasmic glucan (OPG) biosynthesis. Functionally, transfers a phosphoglycerol residue from phosphatidylglycerol to the membrane-bound nascent glucan backbones. The chain is Phosphoglycerol transferase I from Escherichia coli O6:H1 (strain CFT073 / ATCC 700928 / UPEC).